The following is a 372-amino-acid chain: N-methyl-L-tryptophan oxidase (372 aa).

Position 4 to 34 (4 to 34 (DLIIIGSGSVGAAAGYYATRAGLNVLMTDAH)) interacts with FAD. At Cys-308 the chain carries S-8alpha-FAD cysteine.

It belongs to the MSOX/MTOX family. MTOX subfamily. In terms of assembly, monomer. Requires FAD as cofactor.

It catalyses the reaction N(alpha)-methyl-L-tryptophan + O2 + H2O = L-tryptophan + formaldehyde + H2O2. Its function is as follows. Catalyzes the oxidative demethylation of N-methyl-L-tryptophan. This chain is N-methyl-L-tryptophan oxidase, found in Escherichia coli (strain K12 / DH10B).